The chain runs to 155 residues: Endoribonuclease YbeY (155 aa).

Zn(2+) is bound by residues His-114, His-118, and His-124.

It belongs to the endoribonuclease YbeY family. Zn(2+) serves as cofactor.

Its subcellular location is the cytoplasm. Its function is as follows. Single strand-specific metallo-endoribonuclease involved in late-stage 70S ribosome quality control and in maturation of the 3' terminus of the 16S rRNA. The sequence is that of Endoribonuclease YbeY from Baumannia cicadellinicola subsp. Homalodisca coagulata.